Here is a 339-residue protein sequence, read N- to C-terminus: tRNA N6-adenosine threonylcarbamoyltransferase (339 aa).

His-111 and His-115 together coordinate Fe cation. Substrate is bound by residues 139–143 (LVSGG), Asp-172, Gly-185, Asp-189, and Asn-280. Asp-308 is a Fe cation binding site.

This sequence belongs to the KAE1 / TsaD family. The cofactor is Fe(2+).

The protein localises to the cytoplasm. It carries out the reaction L-threonylcarbamoyladenylate + adenosine(37) in tRNA = N(6)-L-threonylcarbamoyladenosine(37) in tRNA + AMP + H(+). Functionally, required for the formation of a threonylcarbamoyl group on adenosine at position 37 (t(6)A37) in tRNAs that read codons beginning with adenine. Is involved in the transfer of the threonylcarbamoyl moiety of threonylcarbamoyl-AMP (TC-AMP) to the N6 group of A37, together with TsaE and TsaB. TsaD likely plays a direct catalytic role in this reaction. This is tRNA N6-adenosine threonylcarbamoyltransferase from Phocaeicola vulgatus (strain ATCC 8482 / DSM 1447 / JCM 5826 / CCUG 4940 / NBRC 14291 / NCTC 11154) (Bacteroides vulgatus).